We begin with the raw amino-acid sequence, 312 residues long: D-apiose import binding protein (312 aa).

An N-terminal signal peptide occupies residues 1-26; the sequence is MKASKRWVALAAATLTLFTATGTAQA. D-apiofuranose contacts are provided by residues asparagine 39, 115–116, 162–164, arginine 168, asparagine 218, aspartate 243, and glutamine 263; these read DR and DIN.

This sequence belongs to the bacterial solute-binding protein 2 family.

It is found in the periplasm. Functionally, part of an ABC transporter complex involved in D-apiose import. Binds D-apiose, D-ribose and D-ribulose. The sequence is that of D-apiose import binding protein from Paraburkholderia graminis (strain ATCC 700544 / DSM 17151 / LMG 18924 / NCIMB 13744 / C4D1M).